Consider the following 494-residue polypeptide: Cysteine--tRNA ligase (494 aa).

Cys29 lines the Zn(2+) pocket. The 'HIGH' region motif lies at 31-41 (VTVYDHCHIGH). Zn(2+)-binding residues include Cys209, His234, and Glu238. The 'KMSKS' region signature appears at 266-270 (KMSKS). Lys269 serves as a coordination point for ATP.

It belongs to the class-I aminoacyl-tRNA synthetase family. Monomer. Requires Zn(2+) as cofactor.

It is found in the cytoplasm. It carries out the reaction tRNA(Cys) + L-cysteine + ATP = L-cysteinyl-tRNA(Cys) + AMP + diphosphate. This Geotalea uraniireducens (strain Rf4) (Geobacter uraniireducens) protein is Cysteine--tRNA ligase.